A 573-amino-acid polypeptide reads, in one-letter code: Glutamate--tRNA ligase (573 aa).

A 'HIGH' region motif is present at residues Pro-107–Asn-117.

Belongs to the class-I aminoacyl-tRNA synthetase family. Glutamate--tRNA ligase type 2 subfamily.

The protein resides in the cytoplasm. The enzyme catalyses tRNA(Glu) + L-glutamate + ATP = L-glutamyl-tRNA(Glu) + AMP + diphosphate. Functionally, catalyzes the attachment of glutamate to tRNA(Glu) in a two-step reaction: glutamate is first activated by ATP to form Glu-AMP and then transferred to the acceptor end of tRNA(Glu). This is Glutamate--tRNA ligase from Thermococcus kodakarensis (strain ATCC BAA-918 / JCM 12380 / KOD1) (Pyrococcus kodakaraensis (strain KOD1)).